The primary structure comprises 1250 residues: Phospholipid-transporting ATPase IC (1250 aa).

Composition is skewed to acidic residues over residues 1–13 (MDTD…EDDS) and 24–40 (SDDE…TDEP). Positions 1–52 (MDTDYESTYEDDSQVPNDDVVPYSDDETDDELDSPQTDEPEQNRRNVQAEQS) are disordered. Over 1 to 133 (MDTDYESTYE…VLLILQTIPQ (133 aa)) the chain is Cytoplasmic. The chain crosses the membrane as a helical span at residues 134 to 154 (ISTVTWSTTLIPLLLVLGITA). At 155–338 (IKDLVDDIAR…TKIDYLMNYM (184 aa)) the chain is on the exoplasmic loop side. A helical membrane pass occupies residues 339 to 359 (VYTIFVLLILAAAGLAIGQTF). The Cytoplasmic portion of the chain corresponds to 360-385 (WEAKLGAANVSWYLYDGNNYSPSYRG). The helical transmembrane segment at 386 to 406 (FLAFWGYIIVLNTMVPISLYV) threads the bilayer. Over 407-956 (SVEVIRLGQS…KFLRYFFYKN (550 aa)) the chain is Exoplasmic loop. Aspartate 454 functions as the 4-aspartylphosphate intermediate in the catalytic mechanism. Residues aspartate 454, lysine 455, threonine 456, glutamate 553, phenylalanine 594, lysine 617, arginine 650, threonine 730, glycine 731, aspartate 732, arginine 865, and lysine 871 each coordinate ATP. Position 454 (aspartate 454) interacts with Mg(2+). A Mg(2+)-binding site is contributed by threonine 456. Aspartate 891 contacts Mg(2+). Residues asparagine 894 and aspartate 895 each coordinate ATP. Position 895 (aspartate 895) interacts with Mg(2+). A helical transmembrane segment spans residues 957–977 (FSFTLVHFWYSFFNGFSAQTV). Residues 978-980 (YED) lie on the Cytoplasmic side of the membrane. A helical membrane pass occupies residues 981–1001 (WFITLYNVLYSSLPVLLVGLL). Residues 1002 to 1034 (DQDVSDKLSLAFPRLYVPGQKDLLFNYKKFFLS) are Exoplasmic loop-facing. Residues 1035–1055 (LFHGIVTSLIIFFIPYGAFLL) form a helical membrane-spanning segment. The Cytoplasmic segment spans residues 1056–1069 (TMGQDGEAPSDYQS). Residues 1070 to 1090 (FAVTTATALVITVNFQIGLDT) traverse the membrane as a helical segment. The Exoplasmic loop segment spans residues 1091–1092 (SY). Residues 1093-1113 (WTFVNAFSIFGSIAIYFGIMF) form a helical membrane-spanning segment. Residues 1114–1117 (DLHS) are Cytoplasmic-facing. A helical transmembrane segment spans residues 1118-1138 (AGIHVLFPSMFIFTGAAPNAL). Residues 1139–1140 (RQ) are Exoplasmic loop-facing. The chain crosses the membrane as a helical span at residues 1141–1161 (PYLWLTIILTVAFCLLPIVAL). The Cytoplasmic portion of the chain corresponds to 1162-1250 (RFLAKTIWPS…AQITHFTPQT (89 aa)).

Belongs to the cation transport ATPase (P-type) (TC 3.A.3) family. Type IV subfamily. As to quaternary structure, component of a P4-ATPase flippase complex which consists of a catalytic alpha subunit and an accessory beta subunit. The flippase ATP8B1:TMEM30A complex can form an intermediate phosphoenzyme in vitro. Also interacts with beta subunit TMEM30B. The cofactor is Mg(2+).

The protein resides in the cell membrane. It localises to the apical cell membrane. Its subcellular location is the cell projection. It is found in the stereocilium. The protein localises to the endoplasmic reticulum. The protein resides in the golgi apparatus. It carries out the reaction ATP + H2O + phospholipidSide 1 = ADP + phosphate + phospholipidSide 2.. It catalyses the reaction a 1,2-diacyl-sn-glycero-3-phospho-L-serine(out) + ATP + H2O = a 1,2-diacyl-sn-glycero-3-phospho-L-serine(in) + ADP + phosphate + H(+). In terms of biological role, catalytic component of a P4-ATPase flippase complex which catalyzes the hydrolysis of ATP coupled to the transport of aminophospholipids from the outer to the inner leaflet of various membranes and ensures the maintenance of asymmetric distribution of phospholipids. Phospholipid translocation also seems to be implicated in vesicle formation and in uptake of lipid signaling molecules. May also participate in the establishment of the canalicular membrane integrity by ensuring asymmetric distribution of phospholipids in the canicular membrane. The chain is Phospholipid-transporting ATPase IC (atp8b1) from Xenopus tropicalis (Western clawed frog).